A 215-amino-acid chain; its full sequence is Pyrrolidone-carboxylate peptidase (215 aa).

Catalysis depends on residues E81, C144, and H168.

Belongs to the peptidase C15 family. Homotetramer.

It is found in the cytoplasm. The catalysed reaction is Release of an N-terminal pyroglutamyl group from a polypeptide, the second amino acid generally not being Pro.. Functionally, removes 5-oxoproline from various penultimate amino acid residues except L-proline. The sequence is that of Pyrrolidone-carboxylate peptidase from Bacillus licheniformis (strain ATCC 14580 / DSM 13 / JCM 2505 / CCUG 7422 / NBRC 12200 / NCIMB 9375 / NCTC 10341 / NRRL NRS-1264 / Gibson 46).